The sequence spans 265 residues: Putative Tubby-like protein 4 (265 aa).

Positions 1–44 constitute an F-box domain; sequence MPPELLRDVLMRIERSEDTWPSRKNVVSCVGVCKNWRQIFKEIV. The region spanning 228 to 250 is the FBD domain; it reads SYELKLALYFAKNSAILKKFVLR.

The protein belongs to the TUB family.

This is Putative Tubby-like protein 4 from Arabidopsis thaliana (Mouse-ear cress).